The chain runs to 929 residues: MSDHPLKEMSDNNRSPPLPEPLSSRYKLYESELSSPTWPSSSQDTHPALPLLEMPEEKDLRSSDEDSHIVKIEKPNERSKRRESELPRRASAGRGAFSLFQAVSYLTGDMKECKNWLKDKPLVLQFLDWVLRGAAQVMFVNNPLSGLIIFIGLLIQNPWWTIAGALGTVVSTLAALALSQDRSAIASGLHGYNGMLVGLLVAVFSEKLDYYWWLLFPVTFASMACPVISSALSTVFAKWDLPVFTLPFNIALTLYLAATGHYNLFFPTTLVKPASSAPNITWSEIEMPLLLQTIPVGVGQVYGCDNPWTGGVILVALFISSPLICLHAAIGSIVGLLAALTVATPFETIYTGLWSYNCVLSCVAIGGMFYVLTWQTHLLALVCALFCAYTGAALSNMMAVVGVPPGTWAFCLSTLTFLLLTSNNPGIHKLPLSKVTYPEANRIYFLTAKRSDEQKPPNGGGGEQSHGGGQRKAEEGSETVFPRRKSVFHIEWSSIRRRSKVFGKSEHQERQTKEPLPYLYRKPTVELLDLNTMEESSEIKVETNTTRTTWIQSSMIAGGKRVSKALSYITGEMKECGEGLKDKSPVFQFLDWVLRGTSQVMFVNNPLSGILIVLGLFVQNPWWAISGCLGTIMSTLTALILSQDKSAIAAGLHGYNGVLVGLLMAVFSDKGNYYWWLLLPVIVMSMTCPILSSALSTVFSKWDLPVFTLPFNIAVTLYLAATGHYNLFFPTKLLQPAVTTPNITWSDVQVPLLLRAIPVGIGQVYGCDNPWTGGIFLVALFVSSPLICLHAAIGSTIGMLAALSIATPFDSIYFGLCGFNSTLACIAIGGMFYVITWQTHLLAIACALFAAYLGAALANMLSVFGLPPCTWPFCLSALTFLLLTTNNPGIYKLPLSKVTYPEANRIYFLSQEKNRRASMITKYQAYDVS.

Positions 1–11 (MSDHPLKEMSD) are enriched in basic and acidic residues. The interval 1-89 (MSDHPLKEMS…KRRESELPRR (89 aa)) is disordered. Over residues 31–42 (SELSSPTWPSSS) the composition is skewed to low complexity. Over residues 55–88 (PEEKDLRSSDEDSHIVKIEKPNERSKRRESELPR) the composition is skewed to basic and acidic residues. 9 consecutive transmembrane segments (helical) span residues 133 to 155 (GAAQ…GLLI), 162 to 179 (IAGA…LALS), 184 to 204 (AIAS…VAVF), 212 to 232 (WWLL…SSAL), 241 to 261 (LPVF…ATGH), 310 to 330 (GGVI…HAAI), 349 to 371 (IYTG…MFYV), 378 to 399 (LLAL…NMMA), and 400 to 420 (VVGV…FLLL). The tract at residues 451-480 (SDEQKPPNGGGGEQSHGGGQRKAEEGSETV) is disordered. The segment covering 458-470 (NGGGGEQSHGGGQ) has biased composition (gly residues). A Phosphoserine modification is found at Ser-486. 4 helical membrane passes run 609 to 629 (GILI…SGCL), 647 to 667 (AIAA…MAVF), 675 to 695 (WWLL…SSAL), and 704 to 724 (LPVF…ATGH). Asn-742 carries an N-linked (GlcNAc...) asparagine glycan. Helical transmembrane passes span 773 to 793 (GGIF…HAAI), 812 to 832 (IYFG…GGMF), 841 to 861 (LLAI…ANML), and 863 to 883 (VFGL…FLLL).

It belongs to the urea transporter family. Interacts with SNAPIN which enhances its urea transport activity. In terms of tissue distribution, expressed in the inner medulla of the kidney. As to expression, expressed in both the inner and outer renal medulla of the kidney.

The protein localises to the apical cell membrane. It localises to the cell membrane. It catalyses the reaction urea(in) = urea(out). Its activity is regulated as follows. Inhibited by phloretin. Activated by vasopressin, forskolin, 3-isobutyl-1-methylxanthine (IBMX) and cAMP. With respect to regulation, inhibited by phloretin. Inhibited by urea analogs and phloretin and activated by forskolin. Its activity is regulated as follows. Inhibited by phloretin and activated by forskolin. Mediates the transport of urea driven by a concentration gradient across the cell membrane of the kidney inner medullary collecting duct which is critical to the urinary concentrating mechanism. This is Urea transporter 2 (Slc14a2) from Rattus norvegicus (Rat).